The primary structure comprises 1468 residues: DNA polymerase III PolC-type (1468 aa).

Residues 197-217 (QKSLEDSAPPSEEVTPTQNYD) form a disordered region. The 157-residue stretch at 430 to 586 (YVVFDVETTG…YDAEATGRLL (157 aa)) folds into the Exonuclease domain.

It belongs to the DNA polymerase type-C family. PolC subfamily.

It is found in the cytoplasm. The enzyme catalyses DNA(n) + a 2'-deoxyribonucleoside 5'-triphosphate = DNA(n+1) + diphosphate. Functionally, required for replicative DNA synthesis. This DNA polymerase also exhibits 3' to 5' exonuclease activity. The polypeptide is DNA polymerase III PolC-type (Streptococcus agalactiae serotype III (strain NEM316)).